The following is a 277-amino-acid chain: MLKIGCHLSASKGFKNMGEEAISIGGNTFQFFTRNPRGSKAKTIDETDIKEFLKLAEENNFSKILGHAPYTLNACSADENTRNFAVEIMKDDLERMEYIPNNLYNFHPGSHVKQGVEIGIKYISDMLNTVLKPEQTTTVLLETMAGKGTEIGRTFDELKEILNNVELSHKVGVCLDTCHVHDAGYDIVNNLDKVVEQFDKIIGLDKLCAIHLNDSMNPFGSHKDRHQKIGEGSIGLEGIKNIINHPMLCNLPFFLETPNELDGYAREIKLLKSIYQN.

Residues H67, H107, E142, D176, H179, H211, D224, H226, and E256 each coordinate Zn(2+).

It belongs to the AP endonuclease 2 family. Zn(2+) is required as a cofactor.

The enzyme catalyses Endonucleolytic cleavage to 5'-phosphooligonucleotide end-products.. Functionally, endonuclease IV plays a role in DNA repair. It cleaves phosphodiester bonds at apurinic or apyrimidinic (AP) sites, generating a 3'-hydroxyl group and a 5'-terminal sugar phosphate. This Clostridium beijerinckii (strain ATCC 51743 / NCIMB 8052) (Clostridium acetobutylicum) protein is Probable endonuclease 4.